The following is a 199-amino-acid chain: Oligoribonuclease (199 aa).

An Exonuclease domain is found at 5 to 170; that stretch reads LVWIDCEMTG…ADIRESIREL (166 aa). Tyr-127 is a catalytic residue.

The protein belongs to the oligoribonuclease family.

The protein resides in the cytoplasm. Its function is as follows. 3'-to-5' exoribonuclease specific for small oligoribonucleotides. This Rhodococcus jostii (strain RHA1) protein is Oligoribonuclease.